The sequence spans 115 residues: Large ribosomal subunit protein bL19 (115 aa).

Belongs to the bacterial ribosomal protein bL19 family.

In terms of biological role, this protein is located at the 30S-50S ribosomal subunit interface and may play a role in the structure and function of the aminoacyl-tRNA binding site. In Streptococcus pneumoniae (strain JJA), this protein is Large ribosomal subunit protein bL19.